We begin with the raw amino-acid sequence, 533 residues long: Tyrosine-protein kinase transforming protein Fps (533 aa).

Residues Ala-1–Asp-46 are disordered. Residues Gln-11–Ser-29 show a composition bias toward polar residues. One can recognise an F-BAR; degenerate domain in the interval Met-50 to Ser-124. One can recognise an SH2 domain in the interval Trp-171–Val-260. In terms of domain architecture, Protein kinase spans Val-272 to Leu-525. ATP is bound by residues Ile-278 to Val-286 and Lys-301. Asp-394 acts as the Proton acceptor in catalysis. Residue Tyr-424 is modified to Phosphotyrosine; by autocatalysis.

This sequence belongs to the protein kinase superfamily. Tyr protein kinase family. Fes/fps subfamily.

The enzyme catalyses L-tyrosyl-[protein] + ATP = O-phospho-L-tyrosyl-[protein] + ADP + H(+). The polypeptide is Tyrosine-protein kinase transforming protein Fps (V-FPS) (Gallus gallus (Chicken)).